Consider the following 1343-residue polypeptide: Xanthine dehydrogenase (1343 aa).

Positions 8-95 (SELVFFVNGK…GCAVTTVEGI (88 aa)) constitute a 2Fe-2S ferredoxin-type domain. C47, C52, C55, C77, C117, C120, C152, and C154 together coordinate [2Fe-2S] cluster. Residues 235–424 (FSSERVTWYR…LGIHFQKTTP (190 aa)) form the FAD-binding PCMH-type domain. FAD is bound by residues 263–270 (LVVGNTEV), F343, 353–357 (CLGGN), D366, L414, and K432. Mo-molybdopterin contacts are provided by Q780 and F811. Substrate is bound by residues E815 and R893. R925 provides a ligand contact to Mo-molybdopterin. Substrate is bound at residue F927. A1092 contributes to the Mo-molybdopterin binding site. The active-site Proton acceptor is E1275.

The protein belongs to the xanthine dehydrogenase family. Homodimer. The cofactor is FAD. Requires Mo-molybdopterin as cofactor. It depends on [2Fe-2S] cluster as a cofactor.

The protein resides in the peroxisome. It catalyses the reaction xanthine + NAD(+) + H2O = urate + NADH + H(+). The catalysed reaction is hypoxanthine + NAD(+) + H2O = xanthine + NADH + H(+). Key enzyme in purine degradation. Catalyzes the oxidation of hypoxanthine to xanthine. Catalyzes the oxidation of xanthine to uric acid. This chain is Xanthine dehydrogenase (ry), found in Drosophila pseudoobscura pseudoobscura (Fruit fly).